The chain runs to 300 residues: Acetyl-coenzyme A carboxylase carboxyl transferase subunit beta 2 (300 aa).

Positions V26–A294 constitute a CoA carboxyltransferase N-terminal domain. Residues C30, C33, C49, and C51 each contribute to the Zn(2+) site. Residues C30–C51 form a C4-type zinc finger.

Belongs to the AccD/PCCB family. Acetyl-CoA carboxylase is a heterohexamer composed of biotin carboxyl carrier protein (AccB), biotin carboxylase (AccC) and two subunits each of ACCase subunit alpha (AccA) and ACCase subunit beta (AccD). Requires Zn(2+) as cofactor.

It localises to the cytoplasm. It catalyses the reaction N(6)-carboxybiotinyl-L-lysyl-[protein] + acetyl-CoA = N(6)-biotinyl-L-lysyl-[protein] + malonyl-CoA. It functions in the pathway lipid metabolism; malonyl-CoA biosynthesis; malonyl-CoA from acetyl-CoA: step 1/1. Functionally, component of the acetyl coenzyme A carboxylase (ACC) complex. Biotin carboxylase (BC) catalyzes the carboxylation of biotin on its carrier protein (BCCP) and then the CO(2) group is transferred by the transcarboxylase to acetyl-CoA to form malonyl-CoA. This Roseiflexus castenholzii (strain DSM 13941 / HLO8) protein is Acetyl-coenzyme A carboxylase carboxyl transferase subunit beta 2.